Reading from the N-terminus, the 390-residue chain is Pyruvate dehydrogenase E1 component subunit alpha, somatic form, mitochondrial (390 aa).

Residues 1–29 (MRKMLAAVSRVLSGVAQKPASRVLVASRH) constitute a mitochondrion transit peptide. K63 carries the N6-acetyllysine; alternate modification. Residue K63 is modified to N6-succinyllysine; alternate. 11 residues coordinate pyruvate: H92, Y118, R119, A157, G165, V167, D196, G197, A198, N225, and Y227. 2 residues coordinate thiamine diphosphate: Y118 and R119. Thiamine diphosphate-binding residues include G165, V167, D196, G197, A198, and N225. Mg(2+) is bound at residue D196. Residues N225 and Y227 each coordinate Mg(2+). S232 carries the phosphoserine; by PDK1 modification. The residue at position 244 (K244) is an N6-acetyllysine; alternate. K244 is modified (N6-succinyllysine; alternate). Residue K267 is modified to N6-acetyllysine. K277 bears the N6-succinyllysine mark. H292 provides a ligand contact to thiamine diphosphate. Position 293 is a phosphoserine; by PDK1, PDK2, PDK3 and PDK4 (S293). Phosphoserine is present on S295. S300 carries the post-translational modification Phosphoserine; by PDK1, PDK2, PDK3 and PDK4. Y301 bears the Phosphotyrosine mark. The residue at position 313 (K313) is an N6-acetyllysine; alternate. K313 carries the N6-succinyllysine; alternate modification. Residues K321 and K336 each carry the N6-acetyllysine modification. An N6-succinyllysine modification is found at K385.

Heterotetramer of two PDHA1 and two PDHB subunits. The heterotetramer interacts with DLAT, and is part of the multimeric pyruvate dehydrogenase complex that contains multiple copies of pyruvate dehydrogenase (E1), dihydrolipoamide acetyltransferase (DLAT, E2) and lipoamide dehydrogenase (DLD, E3). These subunits are bound to an inner core composed of about 48 DLAT and 12 PDHX molecules. Thiamine diphosphate is required as a cofactor. It depends on Mg(2+) as a cofactor. Phosphorylation at Ser-232, Ser-293 and Ser-300 by PDK family kinases inactivates the enzyme; for this phosphorylation at a single site is sufficient. Phosphorylation at Ser-293 interferes with access to active site, and thereby inactivates the enzyme. Dephosphorylation at all three sites, i.e. at Ser-232, Ser-293 and Ser-300, is required for reactivation. In terms of processing, acetylation alters the phosphorylation pattern. Deacetylated by SIRT3.

It is found in the mitochondrion matrix. The catalysed reaction is N(6)-[(R)-lipoyl]-L-lysyl-[protein] + pyruvate + H(+) = N(6)-[(R)-S(8)-acetyldihydrolipoyl]-L-lysyl-[protein] + CO2. Pyruvate dehydrogenase activity is inhibited by phosphorylation of PDHA1; it is reactivated by dephosphorylation. Functionally, the pyruvate dehydrogenase complex catalyzes the overall conversion of pyruvate to acetyl-CoA and CO(2), and thereby links the glycolytic pathway to the tricarboxylic cycle. The protein is Pyruvate dehydrogenase E1 component subunit alpha, somatic form, mitochondrial (PDHA1) of Bos taurus (Bovine).